We begin with the raw amino-acid sequence, 316 residues long: Ornithine carbamoyltransferase (316 aa).

Carbamoyl phosphate is bound by residues 59 to 62 (STRT), glutamine 86, arginine 110, and 137 to 140 (HPCQ). L-ornithine-binding positions include asparagine 168, aspartate 232, and 236–237 (SM). Residues 273–274 (CL) and arginine 301 contribute to the carbamoyl phosphate site.

This sequence belongs to the aspartate/ornithine carbamoyltransferase superfamily. OTCase family.

The protein localises to the cytoplasm. The enzyme catalyses carbamoyl phosphate + L-ornithine = L-citrulline + phosphate + H(+). It functions in the pathway amino-acid biosynthesis; L-arginine biosynthesis; L-arginine from L-ornithine and carbamoyl phosphate: step 1/3. Its function is as follows. Reversibly catalyzes the transfer of the carbamoyl group from carbamoyl phosphate (CP) to the N(epsilon) atom of ornithine (ORN) to produce L-citrulline. The chain is Ornithine carbamoyltransferase from Listeria monocytogenes serotype 4b (strain F2365).